Reading from the N-terminus, the 668-residue chain is MNEKLQSYEKQLTSDIVNNCDLIIEVNASSKTCQETLSSLLRELQLSHFSTAVRPGSDTSIFVFVKVQNDYLIELAHNDRTSSFLCGALDDLNHVNVNSVTDIDSSERIRLVYDKITGSKTEDSLGICPGENPYADIISIFPLHQPKFDIKWSKYWYQLLLGNKKQLDSINAEYGSQVALYFAFADFFKTGVFVLSFWGILGYYFLRPYSYIFAIGVALWGAFFIQFWRVQEHKLTNHWSTVNCQSLAKSMTEFKPQSYRVDSLLGTARPYYPQWEIIVRSTIANVPLFLISGCILLFLIAIAFIVDVTLSEVYSGPLKSIVSLLPAVVFQVLTLPFTFIYSIVAERLTKLENRRTKTDFQASLSGKMFLQNFMLSYTALFLISYIYGPFAEYFVPHYIQNRMSQSFFSVGYIAKSTFKLNPLRLRNQYIYFLTNAQVINYITILAVPQLISYVKKHYMSKPTRELHIQDIPSETVTLKRARSEAEKIEYDCYNDYKDFVLMFGFLVMFSPIYPLAPIFSLVNCVLYIRSSVYRFTKMVKKPVPCRVDSIAPWDQRLSLLSWLGCITMPSICYFYSSTTKPSDKSMVIAAVIGLLSEHLWFLLRMFISSVFPVDKTFFAPAKERQHLLAERSFSIPPVADVPTSTTTAFEEADETLSIYRTAENKKTK.

9 consecutive transmembrane segments (helical) span residues 182 to 202 (FAFA…GILG), 208 to 228 (PYSY…IQFW), 286 to 306 (VPLF…AFIV), 321 to 341 (IVSL…TFIY), 379 to 399 (ALFL…PHYI), 430 to 450 (IYFL…VPQL), 499 to 519 (FVLM…APIF), 557 to 577 (LSLL…FYSS), and 587 to 607 (VIAA…RMFI).

The protein localises to the membrane. This is an uncharacterized protein from Schizosaccharomyces pombe (strain 972 / ATCC 24843) (Fission yeast).